The sequence spans 229 residues: Large ribosomal subunit protein bL25 (229 aa).

Disordered stretches follow at residues 1–21 and 182–229; these read MDII…ASSR and NAPE…KDKK. Residues 195-222 show a composition bias toward low complexity; sequence PAAGAPAAGAAAAPAAGAAAPAKGAAPA.

This sequence belongs to the bacterial ribosomal protein bL25 family. CTC subfamily. As to quaternary structure, part of the 50S ribosomal subunit; part of the 5S rRNA/L5/L18/L25 subcomplex. Contacts the 5S rRNA. Binds to the 5S rRNA independently of L5 and L18.

In terms of biological role, this is one of the proteins that binds to the 5S RNA in the ribosome where it forms part of the central protuberance. The protein is Large ribosomal subunit protein bL25 of Sorangium cellulosum (strain So ce56) (Polyangium cellulosum (strain So ce56)).